Consider the following 331-residue polypeptide: DNA-directed RNA polymerase subunit alpha (331 aa).

Residues 1-232 (MQGTFRDFLK…DQLSVFVDLE (232 aa)) are alpha N-terminal domain (alpha-NTD). An alpha C-terminal domain (alpha-CTD) region spans residues 247-331 (VDPILLRPID…AGLGEDRVVG (85 aa)).

This sequence belongs to the RNA polymerase alpha chain family. In terms of assembly, homodimer. The RNAP catalytic core consists of 2 alpha, 1 beta, 1 beta' and 1 omega subunit. When a sigma factor is associated with the core the holoenzyme is formed, which can initiate transcription.

The catalysed reaction is RNA(n) + a ribonucleoside 5'-triphosphate = RNA(n+1) + diphosphate. DNA-dependent RNA polymerase catalyzes the transcription of DNA into RNA using the four ribonucleoside triphosphates as substrates. The chain is DNA-directed RNA polymerase subunit alpha from Alkalilimnicola ehrlichii (strain ATCC BAA-1101 / DSM 17681 / MLHE-1).